Here is a 251-residue protein sequence, read N- to C-terminus: Flap endonuclease Xni (251 aa).

Aspartate 104 provides a ligand contact to Mg(2+). The 5'-3' exonuclease domain maps to 160-249 (VLPRQLPDYW…IDGNLQQLRL (90 aa)). Residues leucine 171, alanine 172, proline 180, valine 182, and isoleucine 185 each contribute to the K(+) site. Positions 184 to 189 (GIGPKS) are interaction with DNA.

It belongs to the Xni family. Requires Mg(2+) as cofactor. K(+) serves as cofactor.

Its function is as follows. Has flap endonuclease activity. During DNA replication, flap endonucleases cleave the 5'-overhanging flap structure that is generated by displacement synthesis when DNA polymerase encounters the 5'-end of a downstream Okazaki fragment. In Salmonella heidelberg (strain SL476), this protein is Flap endonuclease Xni.